The sequence spans 852 residues: Serine/threonine-protein kinase pakB (852 aa).

Residues 1–334 (MEQSKRVSMM…NVGNKQDEEK (334 aa)) form a disordered region. Residue S8 is modified to Phosphoserine; by autocatalysis. A compositionally biased stretch (pro residues) spans 24–35 (SPPPNRKPPPPN). Residues 44–56 (SSLNSSGSSFVSP) show a composition bias toward low complexity. Over residues 57-74 (SPSPSPSPQQPVKRPLPS) the composition is skewed to pro residues. Composition is skewed to low complexity over residues 90 to 117 (RPQQQQPEIPVRPTTPTRTPPNLINSNG) and 124 to 163 (FSSSSGNSGYSSSNNNNSNSNSSINMNGNHSNGLNGGSSN). The segment covering 181 to 191 (TPPPPPQPTPS) has biased composition (pro residues). The span at 201–210 (ASHNNTQHNI) shows a compositional bias: polar residues. Composition is skewed to low complexity over residues 246–270 (SPGSTSPSLGSSNGNIPISTTSTPI) and 293–317 (SNSNSNNNNNNNNNNNNNSSNATTS). Positions 356–369 (VGSPFNVKHNIHVN) constitute a CRIB domain. Positions 419 to 433 (AQQEQQALMQKQMQQ) are enriched in low complexity. The segment at 419 to 526 (AQQEQQALMQ…GILSQQQEQQ (108 aa)) is disordered. Residues 470-485 (PQHHHQQQPPQQHHHQ) are compositionally biased toward basic residues. Residues 486–514 (QQQQQHNNNNNNNNNNNNNNNNQQSAQQQ) are compositionally biased toward low complexity. The Protein kinase domain occupies 570–823 (GEGSTKIGEG…AKVLLNHPFL (254 aa)). ATP contacts are provided by residues 576–584 (IGEGAAGEV) and K599. D691 (proton acceptor) is an active-site residue.

The protein belongs to the protein kinase superfamily. STE Ser/Thr protein kinase family. STE20 subfamily. In terms of assembly, interacts with rac1A, rac1B, rac1C, racA, racB, racC and racF1. Mg(2+) is required as a cofactor. In terms of processing, autophosphorylated at Ser-8. This may stimulate interaction with GTP-bound Rac family members which then further stimulates autophosphorylation and kinase activity.

It localises to the membrane. Its subcellular location is the cytoplasm. The protein localises to the cytoskeleton. The catalysed reaction is L-seryl-[protein] + ATP = O-phospho-L-seryl-[protein] + ADP + H(+). It catalyses the reaction L-threonyl-[protein] + ATP = O-phospho-L-threonyl-[protein] + ADP + H(+). In terms of biological role, regulator of the myosin I component of the cytoskeleton: required for regulation of cytokinesis, phagocytosis and pinocytosis. This Dictyostelium discoideum (Social amoeba) protein is Serine/threonine-protein kinase pakB.